Reading from the N-terminus, the 158-residue chain is SsrA-binding protein (158 aa).

Belongs to the SmpB family.

The protein localises to the cytoplasm. Required for rescue of stalled ribosomes mediated by trans-translation. Binds to transfer-messenger RNA (tmRNA), required for stable association of tmRNA with ribosomes. tmRNA and SmpB together mimic tRNA shape, replacing the anticodon stem-loop with SmpB. tmRNA is encoded by the ssrA gene; the 2 termini fold to resemble tRNA(Ala) and it encodes a 'tag peptide', a short internal open reading frame. During trans-translation Ala-aminoacylated tmRNA acts like a tRNA, entering the A-site of stalled ribosomes, displacing the stalled mRNA. The ribosome then switches to translate the ORF on the tmRNA; the nascent peptide is terminated with the 'tag peptide' encoded by the tmRNA and targeted for degradation. The ribosome is freed to recommence translation, which seems to be the essential function of trans-translation. The protein is SsrA-binding protein of Acinetobacter baumannii (strain AB307-0294).